The chain runs to 260 residues: 2-amino-3,7-dideoxy-D-threo-hept-6-ulosonate synthase 1 (260 aa).

The active-site Proton acceptor is D26. 1-deoxy-D-threo-hexo-2,5-diulose 6-phosphate is bound by residues 26 to 30 and 144 to 146; these read DHGIT and YPR. Y144 serves as the catalytic Proton donor. K172 (schiff-base intermediate with substrate) is an active-site residue. Residues 194-195 and 221-222 contribute to the 1-deoxy-D-threo-hexo-2,5-diulose 6-phosphate site; these read GG and GR.

Belongs to the DeoC/FbaB aldolase family. ADHS subfamily. In terms of assembly, homodecamer.

It catalyses the reaction 1-deoxy-D-threo-hexo-2,5-diulose 6-phosphate + L-aspartate 4-semialdehyde = 2,3-dioxopropyl phosphate + 2-amino-2,3,7-trideoxy-D-lyxo-hept-6-ulosonate. Catalyzes a transaldol reaction between 6-deoxy-5-ketofructose 1-phosphate (DKFP) and L-aspartate semialdehyde (ASA) with an elimination of hydroxypyruvaldehyde phosphate to yield 2-amino-3,7-dideoxy-D-threo-hept-6-ulosonate (ADH). Plays a key role in an alternative pathway of the biosynthesis of 3-dehydroquinate (DHQ), which is involved in the canonical pathway for the biosynthesis of aromatic amino acids. In Archaeoglobus fulgidus (strain ATCC 49558 / DSM 4304 / JCM 9628 / NBRC 100126 / VC-16), this protein is 2-amino-3,7-dideoxy-D-threo-hept-6-ulosonate synthase 1.